Here is a 623-residue protein sequence, read N- to C-terminus: Dynein axonemal intermediate chain 2 (623 aa).

WD repeat units lie at residues 214 to 254, 261 to 302, 362 to 401, 405 to 445, and 450 to 489; these read KPLS…LVAE, SHRD…EPIE, GHHG…SSIM, YHMA…CDPA, and VCDD…STLQ. Positions 565-602 are disordered; sequence AEALKKKPKPRKKSSVKVEAEEEVEENVGEEEEAGGII. Residues 570–579 are compositionally biased toward basic residues; that stretch reads KKPKPRKKSS. A compositionally biased stretch (acidic residues) spans 584-598; the sequence is AEEEVEENVGEEEEA.

The protein belongs to the dynein intermediate chain family. Consists of at least two heavy chains and a number of intermediate and light chains. Interacts with DNAAF2. Interacts with DNAAF6/PIH1D3. Interacts with HEATR2; probably involved in outer arm dynein assembly. Interacts with CFAP53. Predominantly expressed in ovary, testis and lung.

The protein localises to the cytoplasm. It is found in the cytoskeleton. The protein resides in the cilium axoneme. It localises to the dynein axonemal particle. Its function is as follows. Part of the dynein complex of respiratory cilia. In Mus musculus (Mouse), this protein is Dynein axonemal intermediate chain 2 (Dnai2).